Reading from the N-terminus, the 344-residue chain is MSKHAVVQFGVVYALLFPGVFGFVPSPTNVSVVCHNFVNVLYWNYSNPTEQTKFAIKVEPYESPSQTVDTSQTYLDISSYSTDVEDDYLVLLTAHDGQEKSEDVSIRFTYSKDYFDENKHKYKCSLDFPAVNTSVHKDVIEVSFQHPFKLYKQEIMKEEFTYKITHDEQMVKYSCFEDEDLCNAEVHFNQSVAGQCVELKLEGVIAGIPSYTYSNVCVPQPTPETDKTGIIAALIGGATVVLFIIMGFVWLLWRKWSNIPQMPQGLWCIISKQSHTMLLSQPEPTDICPVTSQGPLNYLTEEDQSVSARDDTGADPPVVSEEGMAGEDSQGLGCSSDYDRPKFL.

The N-terminal stretch at 1–22 (MSKHAVVQFGVVYALLFPGVFG) is a signal peptide. The Extracellular portion of the chain corresponds to 23-229 (FVPSPTNVSV…QPTPETDKTG (207 aa)). In terms of domain architecture, Fibronectin type-III spans 24–102 (VPSPTNVSVV…TAHDGQEKSE (79 aa)). Residues Asn-29, Asn-44, Asn-132, and Asn-189 are each glycosylated (N-linked (GlcNAc...) asparagine). Residues 230–250 (IIAALIGGATVVLFIIMGFVW) form a helical membrane-spanning segment. Residues 251–344 (LLWRKWSNIP…SSDYDRPKFL (94 aa)) are Cytoplasmic-facing. Residues 300–344 (TEEDQSVSARDDTGADPPVVSEEGMAGEDSQGLGCSSDYDRPKFL) are disordered.

It belongs to the type II cytokine receptor family. Highly expressed in brain. Also detected in spleen, heart, intestine, gill and kidney. In immune cell populations, detected at low levels in monocytes, peripheral blood leukocytes, splenocytes, neutrophils and mature macrophages.

The protein resides in the cell membrane. In terms of biological role, receptor which shows binding specificity for the cytokine ifng1 (interferon gamma 1). This is Interferon gamma receptor 1-like from Carassius auratus (Goldfish).